The sequence spans 114 residues: VEQKEIGRTYRYVAQELELKMEPVDPKQYVPRFASELELSEEVQSKANEIIDTTAEQGLLSGKSPTGYAAAAIYAASLLCNEKKTQREVADVAQVTEVTIRNRYQEQIEAMGIH.

2 tandem repeats follow at residues 1–17 (VEQK…AQEL) and 28–109 (QYVP…EQIE).

It belongs to the TFIIB family.

Its function is as follows. Stabilizes TBP binding to an archaeal box-A promoter. Also responsible for recruiting RNA polymerase II to the pre-initiation complex (DNA-TBP-TFIIB). The sequence is that of Transcription initiation factor IIB (tfb) from Haloarcula vallismortis (Halobacterium vallismortis).